The chain runs to 294 residues: NAD kinase (294 aa).

D74 serves as the catalytic Proton acceptor. NAD(+)-binding positions include D74–G75, N148–D149, R159, R176, D178, T189–S194, and Q247.

This sequence belongs to the NAD kinase family. The cofactor is a divalent metal cation.

It localises to the cytoplasm. It carries out the reaction NAD(+) + ATP = ADP + NADP(+) + H(+). Its function is as follows. Involved in the regulation of the intracellular balance of NAD and NADP, and is a key enzyme in the biosynthesis of NADP. Catalyzes specifically the phosphorylation on 2'-hydroxyl of the adenosine moiety of NAD to yield NADP. This chain is NAD kinase, found in Azoarcus sp. (strain BH72).